A 346-amino-acid polypeptide reads, in one-letter code: N-acetyl-gamma-glutamyl-phosphate reductase (346 aa).

Cys150 is an active-site residue.

This sequence belongs to the NAGSA dehydrogenase family. Type 1 subfamily.

It is found in the cytoplasm. The catalysed reaction is N-acetyl-L-glutamate 5-semialdehyde + phosphate + NADP(+) = N-acetyl-L-glutamyl 5-phosphate + NADPH + H(+). Its pathway is amino-acid biosynthesis; L-arginine biosynthesis; N(2)-acetyl-L-ornithine from L-glutamate: step 3/4. Catalyzes the NADPH-dependent reduction of N-acetyl-5-glutamyl phosphate to yield N-acetyl-L-glutamate 5-semialdehyde. The chain is N-acetyl-gamma-glutamyl-phosphate reductase from Desulforudis audaxviator (strain MP104C).